Consider the following 186-residue polypeptide: Pyridoxal 5'-phosphate synthase subunit PdxT (186 aa).

46–48 (GES) serves as a coordination point for L-glutamine. Cysteine 78 acts as the Nucleophile in catalysis. Residues arginine 105 and 134–135 (IR) each bind L-glutamine. Active-site charge relay system residues include histidine 170 and glutamate 172.

The protein belongs to the glutaminase PdxT/SNO family. In the presence of PdxS, forms a dodecamer of heterodimers. Only shows activity in the heterodimer.

It catalyses the reaction aldehydo-D-ribose 5-phosphate + D-glyceraldehyde 3-phosphate + L-glutamine = pyridoxal 5'-phosphate + L-glutamate + phosphate + 3 H2O + H(+). The enzyme catalyses L-glutamine + H2O = L-glutamate + NH4(+). The protein operates within cofactor biosynthesis; pyridoxal 5'-phosphate biosynthesis. Functionally, catalyzes the hydrolysis of glutamine to glutamate and ammonia as part of the biosynthesis of pyridoxal 5'-phosphate. The resulting ammonia molecule is channeled to the active site of PdxS. In Clostridium acetobutylicum (strain ATCC 824 / DSM 792 / JCM 1419 / IAM 19013 / LMG 5710 / NBRC 13948 / NRRL B-527 / VKM B-1787 / 2291 / W), this protein is Pyridoxal 5'-phosphate synthase subunit PdxT.